The chain runs to 101 residues: Cysteine-rich and transmembrane domain-containing protein B (101 aa).

The disordered stretch occupies residues 1-80 (MSQQPPAVGV…PQQQQQQKHS (80 aa)). Residues 24-43 (DAYPPPGQPYPQQGYPPPQG) are compositionally biased toward pro residues. Residues 59 to 77 (YPEQGYPQQGYPPQQQQQQ) are compositionally biased toward low complexity. The chain crosses the membrane as a helical span at residues 78–95 (KHSPGMLEGCIAALCCYC).

It belongs to the CYSTM1 family.

The protein localises to the membrane. The protein is Cysteine-rich and transmembrane domain-containing protein B of Arabidopsis thaliana (Mouse-ear cress).